We begin with the raw amino-acid sequence, 207 residues long: Nucleoplasmin-2 (207 aa).

Residues 1 to 15 show a composition bias toward polar residues; sequence MSRHSTSSVTETTAK. Disordered regions lie at residues 1 to 20 and 121 to 207; these read MSRHSTSSVTETTAKNMLWG and DLTW…VTKK. Residues 123–147 show a composition bias toward acidic residues; it reads TWEDDEEEEEEEEEEDEDEDADISL. Residues 129 to 152 are acidic tract A2; sequence EEEEEEEEEDEDEDADISLEEIPV. Residues 165 to 180 carry the Bipartite nuclear localization signal motif; the sequence is SIAKKKKVEKEEDETV. Basic residues predominate over residues 198–207; that stretch reads PRAKKPVTKK.

This sequence belongs to the nucleoplasmin family. In terms of assembly, homopentamer, when bound to H2A-H2B dimers only. Homodecamer of two stacked pentamers, when bound to H2A-H2B dimers and H3-H4 tetramers simultaneously. As to expression, ovary specific.

It localises to the nucleus. Core histones chaperone involved in chromatin reprogramming, specially during fertilization and early embryonic development. Probably involved in sperm DNA decondensation during fertilization. The chain is Nucleoplasmin-2 (Npm2) from Mus musculus (Mouse).